A 160-amino-acid polypeptide reads, in one-letter code: SsrA-binding protein (160 aa).

It belongs to the SmpB family.

It localises to the cytoplasm. Functionally, required for rescue of stalled ribosomes mediated by trans-translation. Binds to transfer-messenger RNA (tmRNA), required for stable association of tmRNA with ribosomes. tmRNA and SmpB together mimic tRNA shape, replacing the anticodon stem-loop with SmpB. tmRNA is encoded by the ssrA gene; the 2 termini fold to resemble tRNA(Ala) and it encodes a 'tag peptide', a short internal open reading frame. During trans-translation Ala-aminoacylated tmRNA acts like a tRNA, entering the A-site of stalled ribosomes, displacing the stalled mRNA. The ribosome then switches to translate the ORF on the tmRNA; the nascent peptide is terminated with the 'tag peptide' encoded by the tmRNA and targeted for degradation. The ribosome is freed to recommence translation, which seems to be the essential function of trans-translation. The chain is SsrA-binding protein from Haemophilus ducreyi (strain 35000HP / ATCC 700724).